The following is a 106-amino-acid chain: Replication restart protein PriB (106 aa).

The SSB domain maps to 4-103 (MNRLVLSGTV…LHAEQIELID (100 aa)).

This sequence belongs to the PriB family. In terms of assembly, homodimer. Interacts with PriA and DnaT. Component of the replication restart primosome. Primosome assembly occurs via a 'hand-off' mechanism. PriA binds to replication forks, subsequently PriB then DnaT bind; DnaT then displaces ssDNA to generate the helicase loading substrate.

Its function is as follows. Involved in the restart of stalled replication forks, which reloads the replicative helicase on sites other than the origin of replication; the PriA-PriB pathway is the major replication restart pathway. During primosome assembly it facilitates complex formation between PriA and DnaT on DNA; stabilizes PriA on DNA. Stimulates the DNA unwinding activity of PriA helicase. The polypeptide is Replication restart protein PriB (Pectobacterium atrosepticum (strain SCRI 1043 / ATCC BAA-672) (Erwinia carotovora subsp. atroseptica)).